The primary structure comprises 182 residues: uncharacterized protein (182 aa).

Helical transmembrane passes span 29 to 49 and 63 to 83; these read IISG…AGLP and FYFP…MLTL.

The protein localises to the cell membrane. This is an uncharacterized protein from Ureaplasma parvum serovar 3 (strain ATCC 700970).